The following is a 288-amino-acid chain: Zinc finger protein ZAT9 (288 aa).

The C2H2-type 1 zinc-finger motif lies at 4 to 26 (YKCRVCFKSFVNGKALGGHMRSH). 3 disordered regions span residues 20–82 (GGHM…LTRK), 101–123 (SQLG…DTTT), and 189–210 (GGHR…QRSE). Residues 37-52 (PSQLSYETESDVSSSD) show a composition bias toward polar residues. 2 consecutive C2H2-type zinc fingers follow at residues 173–195 (YKCE…RASH) and 224–246 (HECP…KRSH).

It is found in the nucleus. In terms of biological role, probable transcription factor that may be involved in stress responses. This is Zinc finger protein ZAT9 (ZAT9) from Arabidopsis thaliana (Mouse-ear cress).